Consider the following 920-residue polypeptide: KIN14B-interacting protein At4g14310 (920 aa).

Residues 1–10 (MSASTNRRRL) are compositionally biased toward basic residues. Disordered stretches follow at residues 1–199 (MSAS…EKST) and 309–375 (IDGP…EKPS). Over residues 35–54 (PISSKNSNPALQKSLSSKEN) the composition is skewed to polar residues. Over residues 90–105 (TRSTSSGLRGRSSSPS) the composition is skewed to low complexity. Basic and acidic residues predominate over residues 112–135 (SDLRKRNESRVIGEKGESGQDKKS). Polar residues-rich tracts occupy residues 137-147 (LKSSGFKQGTS) and 166-184 (CPVNSSKFEGSSVARNSIS). Residues 327-337 (LNKEELEDRLL) are compositionally biased toward basic and acidic residues. Positions 345 to 355 (SRTQSKTSSHV) are enriched in polar residues. A compositionally biased stretch (basic and acidic residues) spans 357–374 (KGHDSVESNKAVNAEEKP). Residues 435 to 463 (TEILRANEALEEIDDEENREEMELEEIDD) adopt a coiled-coil conformation.

In terms of assembly, interacts with KIN14B, CDKA-1, CKS1 and CKS2.

Its subcellular location is the cytoplasm. Might be involved in division plane determination. This chain is KIN14B-interacting protein At4g14310, found in Arabidopsis thaliana (Mouse-ear cress).